The following is a 125-amino-acid chain: Small ribosomal subunit protein bS6 (125 aa).

The tract at residues Val96–Thr125 is disordered. Residues Glu116 to Thr125 are compositionally biased toward basic and acidic residues.

This sequence belongs to the bacterial ribosomal protein bS6 family.

Binds together with bS18 to 16S ribosomal RNA. The polypeptide is Small ribosomal subunit protein bS6 (Nitrosospira multiformis (strain ATCC 25196 / NCIMB 11849 / C 71)).